We begin with the raw amino-acid sequence, 406 residues long: Inactive serine protease 35 (406 aa).

The N-terminal stretch at 1-17 (MLLWLIIFVSGWTLSLG) is a signal peptide. A glycan (N-linked (GlcNAc...) asparagine) is linked at Asn-87. Positions 121 to 401 (VYGTDSRFSI…ICLWIHGNAA (281 aa)) constitute a Peptidase S1 domain. A disulfide bridge connects residues Cys-151 and Cys-167. Positions 186–204 (LKMRNKGGRKKRRGSRRSR) are enriched in basic residues. The interval 186-248 (LKMRNKGGRK…RPSFQWTRVK (63 aa)) is disordered.

It belongs to the peptidase S1 family.

It is found in the secreted. The sequence is that of Inactive serine protease 35 (Prss35) from Rattus norvegicus (Rat).